Consider the following 120-residue polypeptide: Protein FAM241B (120 aa).

Residues Gln-12–Ala-59 are disordered. Low complexity-rich tracts occupy residues Arg-19–Gly-39 and Pro-47–Ala-59. Ser-61 bears the Phosphoserine mark. Residues Ile-91–Val-111 form a helical membrane-spanning segment.

Belongs to the FAM241 family.

It is found in the membrane. In terms of biological role, may play a role in lysosome homeostasis. In Mus musculus (Mouse), this protein is Protein FAM241B.